A 313-amino-acid polypeptide reads, in one-letter code: MRLVTLAPAKVNLVLRVGPVRADGYHDLRTLMVPLDLGDRVDVRVSPRRGPVRCTVPGRPELDGPENLAARAAEAFRRRFGVDRAVSIRIEKRTPVTAGLGGGSSDAAAVLRCLARALRVRDGAALAALALEIGSDVPFFLGPGPAWAAGRGERLSRAEVPPLDLVLVYPADPSLAIRAGDAYRWLDEARASGSQAPRRLGRPGRWRPTLLGNDLQAPCVARKPALQALLGLLVGAGATAAIMSGSGPTVFGIFPGRGAARGAALAIQGRAKGGAAGVQVLLARTVRRHPRVSPWRSPRSASSRSTRRSSRPT.

K10 is a catalytic residue. 95 to 105 (PVTAGLGGGSS) contributes to the ATP binding site. Residue D136 is part of the active site. Residues 289–313 (HPRVSPWRSPRSASSRSTRRSSRPT) are disordered. Over residues 292-304 (VSPWRSPRSASSR) the composition is skewed to low complexity.

This sequence belongs to the GHMP kinase family. IspE subfamily.

It catalyses the reaction 4-CDP-2-C-methyl-D-erythritol + ATP = 4-CDP-2-C-methyl-D-erythritol 2-phosphate + ADP + H(+). It participates in isoprenoid biosynthesis; isopentenyl diphosphate biosynthesis via DXP pathway; isopentenyl diphosphate from 1-deoxy-D-xylulose 5-phosphate: step 3/6. Functionally, catalyzes the phosphorylation of the position 2 hydroxy group of 4-diphosphocytidyl-2C-methyl-D-erythritol. The polypeptide is 4-diphosphocytidyl-2-C-methyl-D-erythritol kinase (Anaeromyxobacter dehalogenans (strain 2CP-1 / ATCC BAA-258)).